A 268-amino-acid chain; its full sequence is Tropinone reductase homolog At2g29150 (268 aa).

22–46 (LVTGGSKGLGEAVVEELAMLGARVH) provides a ligand contact to NADP(+). Serine 155 provides a ligand contact to substrate. The active-site Proton acceptor is the tyrosine 167.

This sequence belongs to the short-chain dehydrogenases/reductases (SDR) family. SDR65C subfamily.

Its function is as follows. Enantiospecific reductase active on cyclic monoterpenes and small flexible lipophilic carbonyls. No activity with tropinone, nitrogen-containing tropinone analogs, tropine or pseudotropine as substrate. The chain is Tropinone reductase homolog At2g29150 from Arabidopsis thaliana (Mouse-ear cress).